Here is a 498-residue protein sequence, read N- to C-terminus: 3-octaprenyl-4-hydroxybenzoate carboxy-lyase (498 aa).

Asn-175 is a Mn(2+) binding site. Residues 178–180 (IYR), 192–194 (RWL), and 197–198 (RG) each bind prenylated FMN. Glu-241 contributes to the Mn(2+) binding site. The active-site Proton donor is Asp-290.

This sequence belongs to the UbiD family. In terms of assembly, homohexamer. It depends on prenylated FMN as a cofactor. The cofactor is Mn(2+).

It localises to the cell membrane. It catalyses the reaction a 4-hydroxy-3-(all-trans-polyprenyl)benzoate + H(+) = a 2-(all-trans-polyprenyl)phenol + CO2. It functions in the pathway cofactor biosynthesis; ubiquinone biosynthesis. Its function is as follows. Catalyzes the decarboxylation of 3-octaprenyl-4-hydroxy benzoate to 2-octaprenylphenol, an intermediate step in ubiquinone biosynthesis. The chain is 3-octaprenyl-4-hydroxybenzoate carboxy-lyase from Yersinia pseudotuberculosis serotype I (strain IP32953).